Here is a 355-residue protein sequence, read N- to C-terminus: Heat-inducible transcription repressor HrcA (355 aa).

It belongs to the HrcA family.

Negative regulator of class I heat shock genes (grpE-dnaK-dnaJ and groELS operons). Prevents heat-shock induction of these operons. This Prosthecochloris aestuarii (strain DSM 271 / SK 413) protein is Heat-inducible transcription repressor HrcA.